The following is an 82-amino-acid chain: Ice-structuring protein B (82 aa).

Residues 1–23 form the signal peptide; sequence MALSLFTVGQLIFLFWTMRITEA. A propeptide spans 24–44 (removed by a dipeptidylpeptidase); that stretch reads RPDPAAKAAPAAAAVPAAAAP. Position 81 is an arginine amide (Arg81).

It belongs to the type-I AFP family. Amidated. In terms of tissue distribution, detected in liver (at protein level).

It localises to the secreted. The protein localises to the extracellular space. Contributes to protect fish blood from freezing at subzero sea water temperatures. Lowers the blood freezing point. Binds to nascent ice crystals and prevents further growth. The protein is Ice-structuring protein B of Pseudopleuronectes americanus (Winter flounder).